The primary structure comprises 283 residues: Pantothenate synthetase (283 aa).

30 to 37 contacts ATP; the sequence is MGNLHDGH. Residue H37 is the Proton donor of the active site. Residue Q61 participates in (R)-pantoate binding. Residue Q61 participates in beta-alanine binding. 149 to 152 contacts ATP; that stretch reads GEKD. Q155 provides a ligand contact to (R)-pantoate. ATP-binding positions include V178 and 186 to 189; that span reads LSSR.

Belongs to the pantothenate synthetase family. As to quaternary structure, homodimer.

It is found in the cytoplasm. The catalysed reaction is (R)-pantoate + beta-alanine + ATP = (R)-pantothenate + AMP + diphosphate + H(+). It participates in cofactor biosynthesis; (R)-pantothenate biosynthesis; (R)-pantothenate from (R)-pantoate and beta-alanine: step 1/1. Catalyzes the condensation of pantoate with beta-alanine in an ATP-dependent reaction via a pantoyl-adenylate intermediate. The chain is Pantothenate synthetase from Salmonella arizonae (strain ATCC BAA-731 / CDC346-86 / RSK2980).